Consider the following 430-residue polypeptide: Maltoporin (430 aa).

A signal peptide spans 1–23; the sequence is MNNKKTLLAVAISGMMFATSAAA.

This sequence belongs to the porin LamB (TC 1.B.3) family. In terms of assembly, homotrimer formed of three 18-stranded antiparallel beta-barrels, containing three independent channels.

The protein resides in the cell outer membrane. The enzyme catalyses beta-maltose(in) = beta-maltose(out). Its function is as follows. Involved in the transport of maltose and maltodextrins. This chain is Maltoporin, found in Actinobacillus succinogenes (strain ATCC 55618 / DSM 22257 / CCUG 43843 / 130Z).